The sequence spans 67 residues: Large ribosomal subunit protein uL29 (67 aa).

This sequence belongs to the universal ribosomal protein uL29 family.

The chain is Large ribosomal subunit protein uL29 (rpmC) from Thermus thermophilus.